Here is a 455-residue protein sequence, read N- to C-terminus: Cerebellar degeneration-related protein 2 (455 aa).

Coiled coils occupy residues 37–141 (LLDR…SSQG) and 191–264 (EEEN…QAEH). A compositionally biased stretch (polar residues) spans 132–142 (VEELKSSSQGR). A disordered region spans residues 132–152 (VEELKSSSQGRGRQKACDQEK). Residue Ser310 is modified to Phosphoserine. Positions 395–419 (SEAGASGWEPTPVSPESISSPTTTP) are disordered. A compositionally biased stretch (low complexity) spans 403–419 (EPTPVSPESISSPTTTP).

It belongs to the CDR2 family. As to expression, expressed in brain and testis (at protein level). Expressed in the cerebellum, cerebral cortex, heart, lung, spleen, ovary, kidney and testis.

The protein is Cerebellar degeneration-related protein 2 (Cdr2) of Mus musculus (Mouse).